The chain runs to 483 residues: Regulatory protein ViaA (483 aa).

This sequence belongs to the ViaA family. As to quaternary structure, homodimer. Interacts with RavA.

Its subcellular location is the cytoplasm. In terms of biological role, component of the RavA-ViaA chaperone complex, which may act on the membrane to optimize the function of some of the respiratory chains. ViaA stimulates the ATPase activity of RavA. This Escherichia coli (strain 55989 / EAEC) protein is Regulatory protein ViaA.